We begin with the raw amino-acid sequence, 107 residues long: Large ribosomal subunit protein P1 (107 aa).

Low complexity predominate over residues 67 to 82; sequence PTATSAAAAPAAGEAS. A disordered region spans residues 67-107; sequence PTATSAAAAPAAGEASGKAEEKKKEEPEEEGDDDMGFGLFD. The segment covering 83–92 has biased composition (basic and acidic residues); the sequence is GKAEEKKKEE.

It belongs to the eukaryotic ribosomal protein P1/P2 family. P1 and P2 exist as dimers at the large ribosomal subunit.

Functionally, plays an important role in the elongation step of protein synthesis. The chain is Large ribosomal subunit protein P1 from Leishmania peruviana.